We begin with the raw amino-acid sequence, 1074 residues long: Carbamoyl phosphate synthase large chain (1074 aa).

Residues 1 to 399 (MPKRSDIKKV…ALMKAIRSLD (399 aa)) are carboxyphosphate synthetic domain. ATP-binding residues include Arg129, Arg169, Gly175, Gly176, Glu208, Val210, Glu215, Gly241, Ile242, His243, Gln284, and Glu296. In terms of domain architecture, ATP-grasp 1 spans 133-325 (KKAMERIGEP…IARVTAKIAI (193 aa)). Residues Gln284, Glu296, and Asn298 each coordinate Mg(2+). Residues Gln284, Glu296, and Asn298 each coordinate Mn(2+). The interval 400-543 (IDIDLGYNGK…YSTYDEECEL (144 aa)) is oligomerization domain. Residues 544-933 (NPSDNKKVLI…FKAEMSAENN (390 aa)) form a carbamoyl phosphate synthetic domain region. The region spanning 674–865 (NKLLNKLGIP…LAKIAAKVMA (192 aa)) is the ATP-grasp 2 domain. Residues Arg710, Asp749, Leu751, Glu756, Gly781, Ile782, His783, Ser784, Gln824, and Glu836 each coordinate ATP. The Mg(2+) site is built by Gln824, Glu836, and Asn838. Positions 824, 836, and 838 each coordinate Mn(2+). Residues 932–1074 (NNLPLDGIVF…YHREVRYRAL (143 aa)) enclose the MGS-like domain. Positions 934–1074 (LPLDGIVFIS…YHREVRYRAL (141 aa)) are allosteric domain.

It belongs to the CarB family. As to quaternary structure, composed of two chains; the small (or glutamine) chain promotes the hydrolysis of glutamine to ammonia, which is used by the large (or ammonia) chain to synthesize carbamoyl phosphate. Tetramer of heterodimers (alpha,beta)4. Requires Mg(2+) as cofactor. Mn(2+) serves as cofactor.

It carries out the reaction hydrogencarbonate + L-glutamine + 2 ATP + H2O = carbamoyl phosphate + L-glutamate + 2 ADP + phosphate + 2 H(+). The enzyme catalyses hydrogencarbonate + NH4(+) + 2 ATP = carbamoyl phosphate + 2 ADP + phosphate + 2 H(+). It participates in amino-acid biosynthesis; L-arginine biosynthesis; carbamoyl phosphate from bicarbonate: step 1/1. Its pathway is pyrimidine metabolism; UMP biosynthesis via de novo pathway; (S)-dihydroorotate from bicarbonate: step 1/3. Its function is as follows. Large subunit of the glutamine-dependent carbamoyl phosphate synthetase (CPSase). CPSase catalyzes the formation of carbamoyl phosphate from the ammonia moiety of glutamine, carbonate, and phosphate donated by ATP, constituting the first step of 2 biosynthetic pathways, one leading to arginine and/or urea and the other to pyrimidine nucleotides. The large subunit (synthetase) binds the substrates ammonia (free or transferred from glutamine from the small subunit), hydrogencarbonate and ATP and carries out an ATP-coupled ligase reaction, activating hydrogencarbonate by forming carboxy phosphate which reacts with ammonia to form carbamoyl phosphate. The chain is Carbamoyl phosphate synthase large chain from Methanothrix thermoacetophila (strain DSM 6194 / JCM 14653 / NBRC 101360 / PT) (Methanosaeta thermophila).